A 215-amino-acid polypeptide reads, in one-letter code: Heart- and neural crest derivatives-expressed protein 1 (215 aa).

Disordered stretches follow at residues 53–109 (APDF…RTES) and 166–198 (LKKA…EKRI). Positions 65–89 (AAAAATAYGPDARPGQSPGRLEALG) are enriched in low complexity. The span at 92-104 (LGRRKGSGPKKER) shows a compositional bias: basic residues. The bHLH domain occupies 94–146 (RRKGSGPKKERRRTESINSAFAELRECIPNVPADTKLSKIKTLRLATSYIAYL). Phosphothreonine; by PLK4 is present on T107. At S109 the chain carries Phosphoserine; by PLK4.

Efficient DNA binding requires dimerization with another bHLH protein. Forms homodimers and heterodimers with TCF3 gene products E12 and E47, HAND2 and HEY1, HEY2 and HEYL (hairy-related transcription factors). Interacts with MDFIC. Interacts with SOX15; the interaction enhances HAND1-induced differentiation of trophoblast giant cells. In terms of processing, phosphorylation by PLK4 disrupts the interaction with MDFIC and leads to translocation into the nucleoplasm, allowing dimerization and transcription factor activity. Heart.

Its subcellular location is the nucleus. The protein resides in the nucleoplasm. It is found in the nucleolus. Functionally, transcription factor that plays an essential role in both trophoblast giant cell differentiation and in cardiac morphogenesis. Binds the DNA sequence 5'-NRTCTG-3' (non-canonical E-box). Acts as a transcriptional repressor of SOX15. In the adult, could be required for ongoing expression of cardiac-specific genes. The polypeptide is Heart- and neural crest derivatives-expressed protein 1 (HAND1) (Homo sapiens (Human)).